A 325-amino-acid polypeptide reads, in one-letter code: Heat-inducible transcription repressor HrcA (325 aa).

Belongs to the HrcA family.

Negative regulator of class I heat shock genes (grpE-dnaK-dnaJ and groELS operons). Prevents heat-shock induction of these operons. This is Heat-inducible transcription repressor HrcA from Staphylococcus aureus (strain bovine RF122 / ET3-1).